The chain runs to 102 residues: NADH-quinone oxidoreductase subunit K (102 aa).

3 consecutive transmembrane segments (helical) span residues 6–26 (LTGF…GVLA), 30–50 (ILFQ…AFIA), and 63–83 (MFVL…ALFL).

This sequence belongs to the complex I subunit 4L family. In terms of assembly, NDH-1 is composed of 14 different subunits. Subunits NuoA, H, J, K, L, M, N constitute the membrane sector of the complex.

Its subcellular location is the cell inner membrane. The enzyme catalyses a quinone + NADH + 5 H(+)(in) = a quinol + NAD(+) + 4 H(+)(out). NDH-1 shuttles electrons from NADH, via FMN and iron-sulfur (Fe-S) centers, to quinones in the respiratory chain. The immediate electron acceptor for the enzyme in this species is believed to be ubiquinone. Couples the redox reaction to proton translocation (for every two electrons transferred, four hydrogen ions are translocated across the cytoplasmic membrane), and thus conserves the redox energy in a proton gradient. This chain is NADH-quinone oxidoreductase subunit K, found in Rhodopseudomonas palustris (strain BisA53).